The sequence spans 124 residues: Thioredoxin domain-containing protein C21C3.12c (124 aa).

Positions 37–124 (PWCPTVRAAL…ANKFSKFIDI (88 aa)) constitute a Thioredoxin domain. The active-site Nucleophile is cysteine 39.

The protein belongs to the thioredoxin family.

The protein resides in the cytoplasm. The protein localises to the nucleus. The chain is Thioredoxin domain-containing protein C21C3.12c from Schizosaccharomyces pombe (strain 972 / ATCC 24843) (Fission yeast).